A 188-amino-acid polypeptide reads, in one-letter code: dCTP deaminase (188 aa).

Residues 111–116 (KSTYAR), 135–137 (TLE), Gln-156, Tyr-170, and Gln-180 each bind dCTP. Glu-137 (proton donor/acceptor) is an active-site residue.

This sequence belongs to the dCTP deaminase family. Homotrimer.

It catalyses the reaction dCTP + H2O + H(+) = dUTP + NH4(+). It participates in pyrimidine metabolism; dUMP biosynthesis; dUMP from dCTP (dUTP route): step 1/2. Functionally, catalyzes the deamination of dCTP to dUTP. In Nitrosomonas europaea (strain ATCC 19718 / CIP 103999 / KCTC 2705 / NBRC 14298), this protein is dCTP deaminase.